We begin with the raw amino-acid sequence, 539 residues long: Sporozoite-associated protein (539 aa).

5 N-linked (GlcNAc...) asparagine glycosylation sites follow: N31, N90, N102, N149, and N167. The disordered stretch occupies residues 126-153 (LTQSPPPAAAPQSPSPRAILSPRNVSKT). Residues 192-215 (VVAEKSNTPTTPKTTPNGKWTGKN) are compositionally biased toward low complexity. A disordered region spans residues 192 to 231 (VVAEKSNTPTTPKTTPNGKWTGKNANATIETSNTDHTPPS). Residues 216–228 (ANATIETSNTDHT) show a composition bias toward polar residues. N217, N271, and N288 each carry an N-linked (GlcNAc...) asparagine glycan. A disordered region spans residues 303–355 (TLISRAQDDKPGTKGGSDETSSSTAASNERQPMFPNDNDDDDIDQTYCPGVES). Positions 320–332 (DETSSSTAASNER) are enriched in polar residues. N-linked (GlcNAc...) asparagine glycosylation is found at N427 and N503.

As to expression, saliva (at protein level). Female salivary gland. Female midgut.

The protein resides in the secreted. Binds heparan sulfate proteoglycans present on the mammalian cell surface. Modulates host immune responses at the site of inoculation via decreasing the expression of TNF-alpha/TNF, IL-1beta/IL1B, IFN-gamma/IFNG, IL4, MMP9, TGF-beta and ICAM1. In terms of biological role, (Microbial infection) Interacts with the surface of Plasmodium berghei sporozoites. Promotes Plasmodium berghei transmission to the mouse host. Does not affect Plasmodium berghei sporozoite viability. Its function is as follows. (Microbial infection) Interacts with the surface of Plasmodium falciparum sporozoites. The polypeptide is Sporozoite-associated protein (Anopheles gambiae (African malaria mosquito)).